We begin with the raw amino-acid sequence, 453 residues long: Probable exopolygalacturonase B (453 aa).

A signal peptide spans 1 to 16; it reads MKFFALAALFASTVNS. N-linked (GlcNAc...) asparagine glycans are attached at residues Asn-185 and Asn-225. Asp-255 acts as the Proton donor in catalysis. A disulfide bond links Cys-257 and Cys-274. Asn-263 and Asn-275 each carry an N-linked (GlcNAc...) asparagine glycan. His-278 is an active-site residue. PbH1 repeat units lie at residues 295–316 and 327–348; these read IENVWIENVTLLNGENGARLKA and INNVTYKNIHVENTDNPIVLDQ. N-linked (GlcNAc...) asparagine glycans are attached at residues Asn-302, Asn-329, Asn-354, and Asn-366. A PbH1 3 repeat occupies 362–405; the sequence is PSRVNFTNIVFEDIYGTSSGKRGKVVADLTCSPNAVCSGIRLKN. Cys-392 and Cys-398 are joined by a disulfide. N-linked (GlcNAc...) asparagine glycosylation is present at Asn-436.

It belongs to the glycosyl hydrolase 28 family.

Its subcellular location is the secreted. It catalyses the reaction [(1-&gt;4)-alpha-D-galacturonosyl](n) + H2O = alpha-D-galacturonate + [(1-&gt;4)-alpha-D-galacturonosyl](n-1). In terms of biological role, specific in hydrolyzing the terminal glycosidic bond of polygalacturonic acid and oligogalacturonates. This chain is Probable exopolygalacturonase B (pgxB), found in Aspergillus fumigatus (strain CBS 144.89 / FGSC A1163 / CEA10) (Neosartorya fumigata).